The following is a 426-amino-acid chain: Alpha/beta hydrolase pydG (426 aa).

The protein belongs to the AB hydrolase superfamily. Homodimer.

It functions in the pathway mycotoxin biosynthesis. In terms of biological role, alpha/beta hydrolasee; part of the gene cluster that mediates the biosynthesis of pyrrocidines, fungal natural products containing a macrocyclic para-cyclophane connected to a decahydrofluorene ring system that show potent antibiotic activities toward Gram-negative bacteria. Within the pathway, pydG catalyzes the Knoevenagel condensation that affords the 3-pyrrolin-2-one ring, using as substrate the polyketide-tyrosyl acyl thioester product of pydA. The pathway begins with the PKS-NRPS pydA which, with the help of the trans-enoyl reductase pydC, synthesizes the polyketide-tyrosyl acyl thioester product which can be reductively off-loaded by the terminal reductase (R) domain in pydA. The alpha/beta hydrolase pydG is then required to catalyze the subsequent Knoevenagel condensation that affords the 3-pyrrolin-2-one ring, whereas the four proteins pydB, pydE, pydX and pydZ then function synergistically to form the cyclophane. PydB and the membrane-bound pydX and pydZ are lipid-binding proteins that can sequester and mold the pdyG product into the inverse S-shape. Binding of the medium chain reductase pydE to the complex would trigger the cascade oxidative cyclization. PydY is involved in the Diels-Alder cycloaddition that forms the decahydrofluorene core. Additional non-enzymatic hydroxylation yields pyrrocidine A2 which can be further reduced into pyrrocidine B by an endogenous reductase. The polypeptide is Alpha/beta hydrolase pydG (Acremonium sp).